The primary structure comprises 254 residues: Phosphate import ATP-binding protein PstB 2 (254 aa).

Residues 9 to 249 (FNIDNLNLFY…PRDDRTRGYV (241 aa)) enclose the ABC transporter domain. 41-48 (GPSGCGKS) contributes to the ATP binding site.

The protein belongs to the ABC transporter superfamily. Phosphate importer (TC 3.A.1.7) family. In terms of assembly, the complex is composed of two ATP-binding proteins (PstB), two transmembrane proteins (PstC and PstA) and a solute-binding protein (PstS).

The protein localises to the cell inner membrane. It catalyses the reaction phosphate(out) + ATP + H2O = ADP + 2 phosphate(in) + H(+). Part of the ABC transporter complex PstSACB involved in phosphate import. Responsible for energy coupling to the transport system. In Photobacterium profundum (strain SS9), this protein is Phosphate import ATP-binding protein PstB 2.